We begin with the raw amino-acid sequence, 421 residues long: 4-hydroxy-3-methylbut-2-en-1-yl diphosphate synthase (flavodoxin) (421 aa).

[4Fe-4S] cluster is bound by residues Cys-311, Cys-314, Cys-357, and Glu-364.

This sequence belongs to the IspG family. The cofactor is [4Fe-4S] cluster.

The catalysed reaction is (2E)-4-hydroxy-3-methylbut-2-enyl diphosphate + oxidized [flavodoxin] + H2O + 2 H(+) = 2-C-methyl-D-erythritol 2,4-cyclic diphosphate + reduced [flavodoxin]. Its pathway is isoprenoid biosynthesis; isopentenyl diphosphate biosynthesis via DXP pathway; isopentenyl diphosphate from 1-deoxy-D-xylulose 5-phosphate: step 5/6. Converts 2C-methyl-D-erythritol 2,4-cyclodiphosphate (ME-2,4cPP) into 1-hydroxy-2-methyl-2-(E)-butenyl 4-diphosphate. In Xanthomonas euvesicatoria pv. vesicatoria (strain 85-10) (Xanthomonas campestris pv. vesicatoria), this protein is 4-hydroxy-3-methylbut-2-en-1-yl diphosphate synthase (flavodoxin).